The chain runs to 511 residues: Probable eukaryotic translation initiation factor 4H (511 aa).

Disordered stretches follow at residues 25–63 (SWAD…DRGS) and 154–511 (TIRV…EVKI). Basic and acidic residues predominate over residues 39–51 (AREESGSGLKRGD). In terms of domain architecture, RRM spans 86–162 (FTAFIGNLSF…RTIRVNVAEA (77 aa)). Positions 179-196 (WRRSTPLASRESSSQPSR) are enriched in polar residues. 2 stretches are compositionally biased toward basic and acidic residues: residues 230 to 247 (VRRD…RDPG) and 261 to 270 (LAEKVDRDVP). Positions 285–318 (LADTEQTWSRGTKLRTPTTTSRQSSADSTPSSGA) are enriched in polar residues. A compositionally biased stretch (low complexity) spans 331 to 349 (TAGSPSATANATPAAPASG). Position 334 is a phosphoserine (S334). Basic and acidic residues-rich tracts occupy residues 360-388 (AARE…EKQK) and 394-419 (KPVE…DKVA). Residues 420–434 (GKPTTAPATTTNTGA) are compositionally biased toward low complexity. Residues 438-448 (GSADRAKKDEQ) show a composition bias toward basic and acidic residues. The span at 451 to 467 (EQVQPSRKSSQTGATSE) shows a compositional bias: polar residues. Over residues 502–511 (VTKGVEEVKI) the composition is skewed to basic and acidic residues.

The protein resides in the cytoplasm. It localises to the P-body. Functionally, probable translation initiation factor. This chain is Probable eukaryotic translation initiation factor 4H, found in Cryptococcus neoformans var. grubii serotype A (strain H99 / ATCC 208821 / CBS 10515 / FGSC 9487) (Filobasidiella neoformans var. grubii).